The sequence spans 3470 residues: Dynein axonemal heavy chain 5 (3470 aa).

The tract at residues 1-1938 (MFRIGRRQLW…MIHITDVAFT (1938 aa)) is stem. The segment at 899–918 (EKVRHENASPNGDTSGGGEG) is disordered. 4 AAA regions span residues 1939-2161 (YQNE…VLRT), 2221-2440 (TAIS…IQNL), 2547-2800 (VYPP…IWQG), and 2913-3167 (LYNE…FRRS). ATP is bound by residues 1977–1984 (GPAGTGKT) and 2259–2266 (GPSGSGKT). Coiled coils occupy residues 3207–3241 (LKEA…VLKE) and 3434–3468 (HALA…AMTE).

The protein belongs to the dynein heavy chain family. Interacts with DNAL1. Consists of at least two heavy chains and a number of intermediate and light chains.

It localises to the cytoplasm. Its subcellular location is the cytoskeleton. The protein resides in the cilium axoneme. Force generating protein of respiratory cilia. Produces force towards the minus ends of microtubules. Dynein has ATPase activity; the force-producing power stroke is thought to occur on release of ADP. Required for structural and functional integrity of the cilia of ependymal cells lining the brain ventricles. The protein is Dynein axonemal heavy chain 5 of Rattus norvegicus (Rat).